We begin with the raw amino-acid sequence, 478 residues long: Sphingomyelin synthase-related protein 1 (478 aa).

Residues 1 to 22 (MPAGSRAGSRLRSGSLPRPSRL) are compositionally biased toward low complexity. Residues 1–65 (MPAGSRAGSR…TAEEVEKEMA (65 aa)) are disordered. The region spanning 75-141 (WTTKHVAVWL…MLSVRKLQKI (67 aa)) is the SAM domain. Helical transmembrane passes span 216–236 (ILSC…MVIV), 264–284 (FSMT…VLLL), 295–315 (LCSL…VTSL), 341–361 (AIWS…DYMF), 385–405 (FLHT…LAAH), and 410–430 (IDVF…HTLA). Over 431–478 (NTRAYHQSRRARIWFPMFSFFECNVNGTVPNEYCWPFSKPAIMKRLIG) the chain is Cytoplasmic.

It belongs to the sphingomyelin synthase family. As to expression, expressed ubiquitously with highest levels in macrophages and testis.

The protein resides in the endoplasmic reticulum membrane. The catalysed reaction is an N-acylsphing-4-enine + a 1,2-diacyl-sn-glycero-3-phosphoethanolamine = an N-acylsphing-4-enine 1-phosphoethanolamine + a 1,2-diacyl-sn-glycerol. It carries out the reaction an N-acylsphinganine + a 1,2-diacyl-sn-glycero-3-phosphoethanolamine = an N-acylsphinganine-1-phosphoethanolamine + a 1,2-diacyl-sn-glycerol. It catalyses the reaction an N-acyl-(4R)-4-hydroxysphinganine + a 1,2-diacyl-sn-glycero-3-phosphoethanolamine = an N-acyl-(4R)-4-hydroxysphinganine-1-phosphoethanolamine + a 1,2-diacyl-sn-glycerol. The enzyme catalyses N-hexadecanoylsphinganine + a 1,2-diacyl-sn-glycero-3-phosphoethanolamine = N-hexadecanoyl-sphinganine-1-phosphoethanolamine + a 1,2-diacyl-sn-glycerol. The catalysed reaction is N-hexadecanoyl-(4R)-hydroxysphinganine + a 1,2-diacyl-sn-glycero-3-phosphoethanolamine = N-hexadecanoyl-(4R)-hydroxysphinganine-1-phosphoethanolamine + a 1,2-diacyl-sn-glycerol. It functions in the pathway sphingolipid metabolism. Synthesizes sphingolipids through transfer of a phosphatidyl head group from a glycerophospholipid on to the primary hydroxyl of a ceramide in the lumen of the endoplasmic reticulum. Catalyzes the synthesis of ceramide phosphoethanolamines (CPEs) (such as N-acylsphing-4-enine 1-phosphoethanolamine) by transferring phosphoethanolamine head group, which is smaller and more hydrophilic than the phosphocholine (PC) headgroup transferred in the canonical sphingomyelin synthesis (SMS) reaction by SMS1 or SMS2, from a phosphatidylethanolamine (1,2-diacyl-sn-glycero-3-phosphoethanolamine, PE) to a ceramide (such as N-acylsphing-4-enine). The larger PC prevents an efficient fit in the enzyme's catalytic pocket, leading to little or no SMS activity. In vitro, in the absence of ceramide, it has PLC activity with preference for phosphatidylinositol and phosphatidic acid, but also hydrolyzes phosphatidylethanolamine. The sequence is that of Sphingomyelin synthase-related protein 1 from Mus musculus (Mouse).